Consider the following 707-residue polypeptide: Elongation factor G 2 (707 aa).

Residues 8–290 form the tr-type G domain; that stretch reads ERYRNIGISA…AVIDYLPSPA (283 aa). GTP is bound by residues 17–24, 88–92, and 142–145; these read AHIDAGKT, DTPGH, and NKMD.

This sequence belongs to the TRAFAC class translation factor GTPase superfamily. Classic translation factor GTPase family. EF-G/EF-2 subfamily.

It is found in the cytoplasm. Its function is as follows. Catalyzes the GTP-dependent ribosomal translocation step during translation elongation. During this step, the ribosome changes from the pre-translocational (PRE) to the post-translocational (POST) state as the newly formed A-site-bound peptidyl-tRNA and P-site-bound deacylated tRNA move to the P and E sites, respectively. Catalyzes the coordinated movement of the two tRNA molecules, the mRNA and conformational changes in the ribosome. This chain is Elongation factor G 2, found in Bordetella bronchiseptica (strain ATCC BAA-588 / NCTC 13252 / RB50) (Alcaligenes bronchisepticus).